The sequence spans 432 residues: MSSTFFTCNCCVIQFKTSDLQRYHMKTEWHRYNLKRRIANLPPIGAEQFAEKLQISEKEQAENQVDEFGFPVLKPVMNQSNALPQKQKKPIKSKRGRKVGTNLLKRKDRDIAKEKQNRSVSPSGSISSQLSNLTVGTENTNTDYGEDTVSEYGFTSDSNYEYATSDEELDIADKPSDKENEKITITECIYCGKDNKEVERNVKHMFSEHGLFIPERSYLIDLNGLLEFLIKMIVIDHNCLCCNFHGSGLESIRAHMASKRHCRLPYETKEERQLFAPFYDFTYDDHSISKNLQNDRAITSKLSSVYGAKNDEEDGEVDITLVSSENDINANYTTVSIDESGLELTLPTGARLGHRAGQRYYRQNLPSQPNPNESRRTITAADRRMVSGVTEKQYKKGMKKMQQLEKNAINTQIRREIKRVNFQTHYRDELLQ.

Residues 6 to 30 (FTCNCCVIQFKTSDLQRYHMKTEWH) form a C2H2-type 1 zinc finger. The disordered stretch occupies residues 79–150 (QSNALPQKQK…NTDYGEDTVS (72 aa)). Positions 86–98 (KQKKPIKSKRGRK) are enriched in basic residues. Residues 105–117 (KRKDRDIAKEKQN) show a composition bias toward basic and acidic residues. Over residues 118–143 (RSVSPSGSISSQLSNLTVGTENTNTD) the composition is skewed to polar residues. C2H2-type zinc fingers lie at residues 186–209 (TECIYCGKDNKEVERNVKHMFSEH) and 237–261 (HNCLCCNFHGSGLESIRAHMASKRH).

This sequence belongs to the REI1 family. In terms of assembly, associates with nascent pre-60S particles that have not yet entered the translating pool, and is released from mature 60S subunits. Interacts with pre-60S factors NMD3, LSG1, and TIF6.

The protein resides in the cytoplasm. Its function is as follows. Pre-60S-associated cytoplasmic factor involved in the cytoplasmic maturation of the 60S subunit. May act redundantly with REI1 to directly promote a stabilizing structural rearrangement in cytoplasmic 60S subunit maturation independent on the REI1-specific ARX1 recycling. The protein is Cytoplasmic 60S subunit biogenesis factor REH1 (REH1) of Saccharomyces cerevisiae (strain ATCC 204508 / S288c) (Baker's yeast).